Consider the following 227-residue polypeptide: Cytochrome c oxidase subunit 2 (227 aa).

Residues 1–14 (MAYPLQLGLQDATS) are Mitochondrial intermembrane-facing. A helical membrane pass occupies residues 15 to 45 (PIMEELMNFHDHTLMIVFLISSLVLYIISLM). Residues 46 to 59 (LTTKLTHTSTMDAQ) are Mitochondrial matrix-facing. Residues 60–87 (EVETIWTILPAVILIMIALPSLRILYMM) form a helical membrane-spanning segment. At 88–227 (DEINNPVLTV…HFENWSASMI (140 aa)) the chain is on the mitochondrial intermembrane side. 6 residues coordinate Cu cation: histidine 161, cysteine 196, glutamate 198, cysteine 200, histidine 204, and methionine 207. Glutamate 198 is a Mg(2+) binding site.

Belongs to the cytochrome c oxidase subunit 2 family. As to quaternary structure, component of the cytochrome c oxidase (complex IV, CIV), a multisubunit enzyme composed of 14 subunits. The complex is composed of a catalytic core of 3 subunits MT-CO1, MT-CO2 and MT-CO3, encoded in the mitochondrial DNA, and 11 supernumerary subunits COX4I, COX5A, COX5B, COX6A, COX6B, COX6C, COX7A, COX7B, COX7C, COX8 and NDUFA4, which are encoded in the nuclear genome. The complex exists as a monomer or a dimer and forms supercomplexes (SCs) in the inner mitochondrial membrane with NADH-ubiquinone oxidoreductase (complex I, CI) and ubiquinol-cytochrome c oxidoreductase (cytochrome b-c1 complex, complex III, CIII), resulting in different assemblies (supercomplex SCI(1)III(2)IV(1) and megacomplex MCI(2)III(2)IV(2)). Found in a complex with TMEM177, COA6, COX18, COX20, SCO1 and SCO2. Interacts with TMEM177 in a COX20-dependent manner. Interacts with COX20. Interacts with COX16. Requires Cu cation as cofactor.

The protein resides in the mitochondrion inner membrane. It carries out the reaction 4 Fe(II)-[cytochrome c] + O2 + 8 H(+)(in) = 4 Fe(III)-[cytochrome c] + 2 H2O + 4 H(+)(out). Functionally, component of the cytochrome c oxidase, the last enzyme in the mitochondrial electron transport chain which drives oxidative phosphorylation. The respiratory chain contains 3 multisubunit complexes succinate dehydrogenase (complex II, CII), ubiquinol-cytochrome c oxidoreductase (cytochrome b-c1 complex, complex III, CIII) and cytochrome c oxidase (complex IV, CIV), that cooperate to transfer electrons derived from NADH and succinate to molecular oxygen, creating an electrochemical gradient over the inner membrane that drives transmembrane transport and the ATP synthase. Cytochrome c oxidase is the component of the respiratory chain that catalyzes the reduction of oxygen to water. Electrons originating from reduced cytochrome c in the intermembrane space (IMS) are transferred via the dinuclear copper A center (CU(A)) of subunit 2 and heme A of subunit 1 to the active site in subunit 1, a binuclear center (BNC) formed by heme A3 and copper B (CU(B)). The BNC reduces molecular oxygen to 2 water molecules using 4 electrons from cytochrome c in the IMS and 4 protons from the mitochondrial matrix. This is Cytochrome c oxidase subunit 2 (MT-CO2) from Zelotomys hildegardeae (Hildegarde's broad-headed mouse).